Consider the following 348-residue polypeptide: Trace amine-associated receptor 9 (348 aa).

Over 1-33 (MVNNFSQAEAVELCYKNVNESCIKTPYSPGPRS) the chain is Extracellular. 2 N-linked (GlcNAc...) asparagine glycosylation sites follow: Asn-4 and Asn-19. 2 disulfides stabilise this stretch: Cys-22–Cys-186 and Cys-105–Cys-190. Residues 34-58 (ILYAVLGFGAVLAAFGNLLVMIAIL) traverse the membrane as a helical segment. The Cytoplasmic portion of the chain corresponds to 59-68 (HFKQLHTPTN). A helical transmembrane segment spans residues 69–90 (FLIASLACADFLVGVTVMPFST). The Extracellular segment spans residues 91-105 (VRSVESCWYFGDSYC). A helical transmembrane segment spans residues 106–128 (KFHTCFDTSFCFASLFHLCCISV). The spermidine site is built by Asp-112 and Thr-113. Residues 129–148 (DRYIAVTDPLTYPTKFTVSV) are Cytoplasmic-facing. Residues 149–170 (SGICIVLSWFFSVTYSFSIFYT) form a helical membrane-spanning segment. The Extracellular segment spans residues 171–196 (GANEEGIEELVVALTCVGGCQAPLNQ). The segment at 174-187 (EEGIEELVVALTCV) is extracellular Loop 2 (ECL2). The helical transmembrane segment at 197–218 (NWVLLCFLLFFIPNVAMVFIYS) threads the bilayer. At 219 to 256 (KIFLVAKHQARKIESTASQAQSSSESYKERVAKRERKA) the chain is on the cytoplasmic side. Residues 257–280 (AKTLGIAMAAFLVSWLPYLVDAVI) traverse the membrane as a helical segment. At 281–293 (DAYMNFITPPYVY) the chain is on the extracellular side. The helical transmembrane segment at 294–314 (EILVWCVYYNSAMNPLIYAFF) threads the bilayer. The Cytoplasmic portion of the chain corresponds to 315-348 (YQWFGKAIKLIVSGKVLRTDSSTTNLFSEEVETD).

This sequence belongs to the G-protein coupled receptor 1 family.

The protein localises to the cell membrane. Functionally, olfactory receptor specific for trace amines, such as N,N-dimethylcyclohexylamine (DMCHA) and beta-phenylethylamine (beta-PEA). In contrast to mouse and rat orthologs, not activated by triethylamine, cadaverine (CAD) or spermidine. Trace amine compounds are enriched in animal body fluids and act on trace amine-associated receptors (TAARs) to elicit both intraspecific and interspecific innate behaviors. Trace amine-binding causes a conformation change that triggers signaling via G(s)-class of G alpha proteins (GNAL or GNAS). In mature olfactory sensory neurons, TAAR9 is coupled with GNAL/G(olf)G alpha protein and mediates activation of adenylate cyclase activity to activate cAMP signaling and eventually transmit odorant signals to achieve membrane depolarization. In immature olfactory sensory neurons, TAAR9 is coupled with GNAS/G(s) G alpha proteins. The chain is Trace amine-associated receptor 9 from Homo sapiens (Human).